The following is a 342-amino-acid chain: MSSERDIWITEVALRDGSHAINHQYTVEQVVSVAQALDEANVPYIEVSHGDGLAGSSLQYGLSRTDEMELIEAAVSVCKKAKIAVLLLPGIGTIRELDAAAKRGVKMVRIATHVTEADISAQHITRAKELGLEAVGFLMMSHMASTEKLVEQAKLMESYGADVVYVVDSAGALLPHEVTERIRALKQSLGIEIGFHGHNNLSLAMANTLAAIQEGATRIDGSVRCLGAGAGNTQTEVLVAVLDRIGLKTGVDLYKMMDLAEEIVAPILQVPQEITRDSLILGYAGVYSSFRLHAERAAKRFGVDSRDILVELGKRKVVGGQEDMIIDIAAEIASKKTATGAR.

The 251-residue stretch at 7-257 (IWITEVALRD…KTGVDLYKMM (251 aa)) folds into the Pyruvate carboxyltransferase domain. 15 to 16 (RD) is a substrate binding site. Asp-16 is a binding site for Mn(2+). Residue His-19 is the Proton acceptor of the active site. Substrate contacts are provided by Ser-169 and His-196. 2 residues coordinate Mn(2+): His-196 and His-198. Tyr-287 lines the substrate pocket.

Belongs to the 4-hydroxy-2-oxovalerate aldolase family.

It carries out the reaction (S)-4-hydroxy-2-oxopentanoate = acetaldehyde + pyruvate. This Geobacillus thermodenitrificans (strain NG80-2) protein is 4-hydroxy-2-oxovalerate aldolase (nbaI).